The chain runs to 824 residues: Glycerol-3-phosphate acyltransferase (824 aa).

The HXXXXD motif motif lies at 302-307 (CHRSHM).

Belongs to the GPAT/DAPAT family.

It is found in the cell inner membrane. The catalysed reaction is sn-glycerol 3-phosphate + an acyl-CoA = a 1-acyl-sn-glycero-3-phosphate + CoA. It participates in phospholipid metabolism; CDP-diacylglycerol biosynthesis; CDP-diacylglycerol from sn-glycerol 3-phosphate: step 1/3. The polypeptide is Glycerol-3-phosphate acyltransferase (Actinobacillus pleuropneumoniae serotype 3 (strain JL03)).